Here is a 417-residue protein sequence, read N- to C-terminus: NADH-quinone oxidoreductase subunit D (417 aa).

This sequence belongs to the complex I 49 kDa subunit family. As to quaternary structure, NDH-1 is composed of 14 different subunits. Subunits NuoB, C, D, E, F, and G constitute the peripheral sector of the complex.

The protein resides in the cell inner membrane. The enzyme catalyses a quinone + NADH + 5 H(+)(in) = a quinol + NAD(+) + 4 H(+)(out). Functionally, NDH-1 shuttles electrons from NADH, via FMN and iron-sulfur (Fe-S) centers, to quinones in the respiratory chain. The immediate electron acceptor for the enzyme in this species is believed to be ubiquinone. Couples the redox reaction to proton translocation (for every two electrons transferred, four hydrogen ions are translocated across the cytoplasmic membrane), and thus conserves the redox energy in a proton gradient. This Coxiella burnetii (strain Dugway 5J108-111) protein is NADH-quinone oxidoreductase subunit D.